A 581-amino-acid chain; its full sequence is Pyridine nucleotide-disulfide oxidoreductase domain-containing protein 2 (581 aa).

Val38–Gly71 is an FAD binding site.

This sequence belongs to the carotenoid/retinoid oxidoreductase family. As to quaternary structure, interacts with COX5B; this interaction may contribute to localize PYROXD2 to the inner face of the inner mitochondrial membrane.

The protein resides in the mitochondrion matrix. In terms of biological role, probable oxidoreductase that may play a role as regulator of mitochondrial function. The polypeptide is Pyridine nucleotide-disulfide oxidoreductase domain-containing protein 2 (Rattus norvegicus (Rat)).